We begin with the raw amino-acid sequence, 456 residues long: RuvB-like 1 (456 aa).

A Glycyl lysine isopeptide (Lys-Gly) (interchain with G-Cter in SUMO2) cross-link involves residue Lys2. An ATP-binding site is contributed by 70 to 77; sequence GPPGTGKT. A Glycyl lysine isopeptide (Lys-Gly) (interchain with G-Cter in SUMO1); alternate cross-link involves residue Lys225. A Glycyl lysine isopeptide (Lys-Gly) (interchain with G-Cter in SUMO2); alternate cross-link involves residue Lys225. Residue Lys445 forms a Glycyl lysine isopeptide (Lys-Gly) (interchain with G-Cter in SUMO2) linkage. Lys453 carries the N6-acetyllysine modification.

This sequence belongs to the RuvB family. Forms homohexameric rings. Can form a dodecamer with RUVBL2 made of two stacked hexameric rings; however, even though RUVBL1 and RUVBL2 are present in equimolar ratio, the oligomeric status of each hexamer is not known. Oligomerization may regulate binding to nucleic acids and conversely, binding to nucleic acids may affect the dodecameric assembly. Interaction of the complex with DHX34 results in conformational changes of the N-terminus of the RUVBL2 subunits, resulting in loss of nucleotide binding ability and ATP hydrolysis of the complex. Interacts with the transcriptional activation domain of MYC. Component of the RNA polymerase II holoenzyme complex. May also act to bridge the LEF1/TCF1-CTNNB1 complex and TBP. Component of the NuA4 histone acetyltransferase complex which contains the catalytic subunit KAT5/TIP60 and the subunits EP400, TRRAP/PAF400, BRD8/SMAP, EPC1, DMAP1/DNMAP1, RUVBL1/TIP49, RUVBL2, ING3, actin, ACTL6A/BAF53A, MORF4L1/MRG15, MORF4L2/MRGX, MRGBP, YEATS4/GAS41, VPS72/YL1 and MEAF6. The NuA4 complex interacts with MYC and the adenovirus E1A protein. RUVBL1 interacts with EP400. Component of a NuA4-related complex which contains EP400, TRRAP/PAF400, SRCAP, BRD8/SMAP, EPC1, DMAP1/DNMAP1, RUVBL1/TIP49, RUVBL2, actin, ACTL6A/BAF53A, VPS72 and YEATS4/GAS41. Component of the BAF53 complex, at least composed of ACTL6A/BAF53A, RUVBL1/TIP49, SMARCA2/BRM, and TRRAP/PAF400. Component of some MLL1/MLL complex, at least composed of the core components KMT2A/MLL1, ASH2L, HCFC1/HCF1, WDR5 and RBBP5, as well as the facultative components BACC1, CHD8, E2F6, HSP70, INO80C, KANSL1, LAS1L, MAX, MCRS1, MGA, MYST1/MOF, PELP1, PHF20, PRP31, RING2, RUVB1/TIP49A, RUVB2/TIP49B, SENP3, TAF1, TAF4, TAF6, TAF7, TAF9 and TEX10. Associates with alpha and gamma tubulins, particularly during metaphase and early anaphase. Interacts with NPAT. Component of the chromatin-remodeling INO80 complex; specifically part of a complex module associated with the helicase ATP-binding and the helicase C-terminal domain of INO80. Interacts with IGHMBP2. Interacts with OFD1. Interacts with HINT1. Component of a complex with USP49 and PSMC5. Component of a SWR1-like complex. Component of the R2TP complex composed at least of RUVBL1, RUVBL2, RPAP3 and PIHD1. Component of the PAQosome complex which is responsible for the biogenesis of several protein complexes and which consists of R2TP complex members RUVBL1, RUVBL2, RPAP3 and PIH1D1, URI complex members PFDN2, PFDN6, PDRG1, UXT and URI1 as well as ASDURF, POLR2E and DNAAF10/WDR92. Interacts with PIH1D1. Interacts with ITFG1. Interacts with WAC; WAC positively regulates MTOR activity by promoting the assembly of the TTT complex composed of TELO2, TTI1 and TTI2 and the RUVBL complex composed of RUVBL1 and RUVBL2 into the TTT-RUVBL complex which leads to the dimerization of the mTORC1 complex and its subsequent activation. The RUVBL1/RUVBL2 complex interacts with ZNHIT1 (via HIT-type zinc finger), ZNHIT3 (via HIT-type zinc finger), ZNHIT6 (via HIT-type zinc finger) and DDX59/ZNHIT5 (via HIT-type zinc finger) in the presence of ADP. Interacts with NOPCHAP1; the interaction is direct and disrupted upon ATP binding. Interacts with SMG1. Interacts with NOP2, NOP56 and NUFIP1.

It is found in the nucleus matrix. Its subcellular location is the nucleus. The protein resides in the nucleoplasm. The protein localises to the cytoplasm. It localises to the membrane. It is found in the cytoskeleton. Its subcellular location is the microtubule organizing center. The protein resides in the centrosome. The protein localises to the dynein axonemal particle. The enzyme catalyses ATP + H2O = ADP + phosphate + H(+). Possesses single-stranded DNA-stimulated ATPase and ATP-dependent DNA helicase (3' to 5') activity; hexamerization is thought to be critical for ATP hydrolysis and adjacent subunits in the ring-like structure contribute to the ATPase activity. Component of the NuA4 histone acetyltransferase complex which is involved in transcriptional activation of select genes principally by acetylation of nucleosomal histones H4 and H2A. This modification may both alter nucleosome-DNA interactions and promote interaction of the modified histones with other proteins which positively regulate transcription. This complex may be required for the activation of transcriptional programs associated with oncogene and proto-oncogene mediated growth induction, tumor suppressor mediated growth arrest and replicative senescence, apoptosis, and DNA repair. The NuA4 complex ATPase and helicase activities seem to be, at least in part, contributed by the association of RUVBL1 and RUVBL2 with EP400. NuA4 may also play a direct role in DNA repair when recruited to sites of DNA damage. Component of a SWR1-like complex that specifically mediates the removal of histone H2A.Z/H2AZ1 from the nucleosome. Proposed core component of the chromatin remodeling INO80 complex which exhibits DNA- and nucleosome-activated ATPase activity and catalyzes ATP-dependent nucleosome sliding. Plays an essential role in oncogenic transformation by MYC and also modulates transcriptional activation by the LEF1/TCF1-CTNNB1 complex. Essential for cell proliferation. May be able to bind plasminogen at cell surface and enhance plasminogen activation. This Mus musculus (Mouse) protein is RuvB-like 1 (Ruvbl1).